The sequence spans 293 residues: DNA repair protein RecO (293 aa).

It belongs to the RecO family.

In terms of biological role, involved in DNA repair and RecF pathway recombination. The polypeptide is DNA repair protein RecO (Acaryochloris marina (strain MBIC 11017)).